We begin with the raw amino-acid sequence, 307 residues long: NAD kinase 1 (307 aa).

Catalysis depends on D67, which acts as the Proton acceptor. NAD(+) is bound by residues 67 to 68 (DG), 149 to 150 (ND), R179, and D181.

The protein belongs to the NAD kinase family. A divalent metal cation serves as cofactor.

It localises to the cytoplasm. The catalysed reaction is NAD(+) + ATP = ADP + NADP(+) + H(+). In terms of biological role, involved in the regulation of the intracellular balance of NAD and NADP, and is a key enzyme in the biosynthesis of NADP. Catalyzes specifically the phosphorylation on 2'-hydroxyl of the adenosine moiety of NAD to yield NADP. The sequence is that of NAD kinase 1 from Prochlorococcus marinus (strain SARG / CCMP1375 / SS120).